The primary structure comprises 473 residues: ATP synthase subunit beta 2 (473 aa).

158–165 (GGAGVGKT) serves as a coordination point for ATP.

This sequence belongs to the ATPase alpha/beta chains family. As to quaternary structure, F-type ATPases have 2 components, CF(1) - the catalytic core - and CF(0) - the membrane proton channel. CF(1) has five subunits: alpha(3), beta(3), gamma(1), delta(1), epsilon(1). CF(0) has three main subunits: a(1), b(2) and c(9-12). The alpha and beta chains form an alternating ring which encloses part of the gamma chain. CF(1) is attached to CF(0) by a central stalk formed by the gamma and epsilon chains, while a peripheral stalk is formed by the delta and b chains.

The protein localises to the cell membrane. It catalyses the reaction ATP + H2O + 4 H(+)(in) = ADP + phosphate + 5 H(+)(out). Produces ATP from ADP in the presence of a proton gradient across the membrane. The catalytic sites are hosted primarily by the beta subunits. In Listeria monocytogenes serotype 4b (strain F2365), this protein is ATP synthase subunit beta 2.